Reading from the N-terminus, the 304-residue chain is Acetyl-coenzyme A carboxylase carboxyl transferase subunit beta (304 aa).

Positions 16–42 are disordered; the sequence is SSLPPKNSEGGLAYFDEPSPEQESTRK. A CoA carboxyltransferase N-terminal domain is found at 48 to 304; the sequence is LWVKCPKCGE…LLRYHQEGAV (257 aa). Zn(2+)-binding residues include Cys-52, Cys-55, Cys-71, and Cys-74. A C4-type zinc finger spans residues 52–74; it reads CPKCGEALFNKDLVENQRVCLTC.

It belongs to the AccD/PCCB family. As to quaternary structure, acetyl-CoA carboxylase is a heterohexamer composed of biotin carboxyl carrier protein (AccB), biotin carboxylase (AccC) and two subunits each of ACCase subunit alpha (AccA) and ACCase subunit beta (AccD). Zn(2+) serves as cofactor.

It is found in the cytoplasm. The catalysed reaction is N(6)-carboxybiotinyl-L-lysyl-[protein] + acetyl-CoA = N(6)-biotinyl-L-lysyl-[protein] + malonyl-CoA. The protein operates within lipid metabolism; malonyl-CoA biosynthesis; malonyl-CoA from acetyl-CoA: step 1/1. Functionally, component of the acetyl coenzyme A carboxylase (ACC) complex. Biotin carboxylase (BC) catalyzes the carboxylation of biotin on its carrier protein (BCCP) and then the CO(2) group is transferred by the transcarboxylase to acetyl-CoA to form malonyl-CoA. This Desulfitobacterium hafniense (strain Y51) protein is Acetyl-coenzyme A carboxylase carboxyl transferase subunit beta.